The chain runs to 278 residues: MFDEFYFRKSLRPRESQNHVRNAACEYILKFMKTEGTIVKTYHLGSSLEPWGRKFHERIDRTVFDQDLTPFVKYTLNKKKRWEAEGNPDILYGLQRSYQNMGVMVAERVSLRSTPHYCIVSINNYYRNFFDQFPIRHLHQLQDHNYQCQSTNSIRGQPFKSLQPENRTPTQVTGHQQESSANVSVAYHIITPPKNYEVLRNKDFRVGHSDRNGIRTIARRRRFQFMKEAVFDLKNEILEDFGDSDDDDENEILLCEESCGPRKFYNLHDHLVKSNHNE.

The interval 152-179 is disordered; sequence NSIRGQPFKSLQPENRTPTQVTGHQQES. The span at 163 to 179 shows a compositional bias: polar residues; sequence QPENRTPTQVTGHQQES.

Its function is as follows. Plays a role in innate immunity by conferring resistance to virulent strains of the Gram-negative bacterium P.aeruginosa via the zip-2 pathway and independent of the pmk-1 p38MAPK pathway. Induced as part of several immune responses to translational inhibition arising from endocytosis of ToxA during P.aeruginosa infection or exposure to exogenous cycloheximide. In Caenorhabditis elegans, this protein is Protein irg-2.